A 151-amino-acid polypeptide reads, in one-letter code: MSDERTFIAIKPDGVQRGLISQILSRFESRGYKLVGIKLVTPTENLLKQHYAEHVEKPFFPKMLAYMTSGPILATVWEGKDVVKQGRVILGATNPLNSAPGTIRGDFALDMGRNVCHGSDSVESAQREIDLWFKKEELVDWKLNQLSWIYE.

The ATP site is built by Lys-11, Phe-59, Arg-87, Thr-93, Arg-104, and Asn-114. His-117 (pros-phosphohistidine intermediate) is an active-site residue.

This sequence belongs to the NDK family. Mg(2+) is required as a cofactor.

The catalysed reaction is a 2'-deoxyribonucleoside 5'-diphosphate + ATP = a 2'-deoxyribonucleoside 5'-triphosphate + ADP. The enzyme catalyses a ribonucleoside 5'-diphosphate + ATP = a ribonucleoside 5'-triphosphate + ADP. Its function is as follows. Major role in the synthesis of nucleoside triphosphates other than ATP. The ATP gamma phosphate is transferred to the NDP beta phosphate via a ping-pong mechanism, using a phosphorylated active-site intermediate. This is Nucleoside diphosphate kinase (NDK1) from Eremothecium gossypii (strain ATCC 10895 / CBS 109.51 / FGSC 9923 / NRRL Y-1056) (Yeast).